The following is a 562-amino-acid chain: Arginine--tRNA ligase (562 aa).

The 'HIGH' region signature appears at 129–139 (ANPTGPLHVGH).

The protein belongs to the class-I aminoacyl-tRNA synthetase family. In terms of assembly, monomer.

The protein resides in the cytoplasm. The enzyme catalyses tRNA(Arg) + L-arginine + ATP = L-arginyl-tRNA(Arg) + AMP + diphosphate. This is Arginine--tRNA ligase from Xanthomonas campestris pv. campestris (strain B100).